Consider the following 932-residue polypeptide: Glycine dehydrogenase (decarboxylating) (932 aa).

Position 685 is an N6-(pyridoxal phosphate)lysine (Lys-685).

The protein belongs to the GcvP family. The glycine cleavage system is composed of four proteins: P, T, L and H. Requires pyridoxal 5'-phosphate as cofactor.

The enzyme catalyses N(6)-[(R)-lipoyl]-L-lysyl-[glycine-cleavage complex H protein] + glycine + H(+) = N(6)-[(R)-S(8)-aminomethyldihydrolipoyl]-L-lysyl-[glycine-cleavage complex H protein] + CO2. Its function is as follows. The glycine cleavage system catalyzes the degradation of glycine. The P protein binds the alpha-amino group of glycine through its pyridoxal phosphate cofactor; CO(2) is released and the remaining methylamine moiety is then transferred to the lipoamide cofactor of the H protein. This is Glycine dehydrogenase (decarboxylating) from Brucella melitensis biotype 1 (strain ATCC 23456 / CCUG 17765 / NCTC 10094 / 16M).